Reading from the N-terminus, the 1041-residue chain is Nuclear migration protein unc-83 (1041 aa).

3 disordered regions span residues 258 to 283 (VGHL…TETV), 453 to 498 (IHGQ…LEDD), and 613 to 646 (IRNR…DSIS). A compositionally biased stretch (basic residues) spans 456 to 465 (QKKPLRRASR). The segment covering 613 to 626 (IRNRDSDTAPEHSD) has biased composition (basic and acidic residues). Coiled-coil stretches lie at residues 785–816 (RSKE…DLLA) and 931–951 (KAEL…FNDM). Residues 986 to 1041 (TENEPLTIAEAISSSRLIKFTFALSLLAALAAIFYYHVFGKPFGPHVTYVNGPPPV) form the KASH domain. The chain crosses the membrane as a helical; Anchor for type IV membrane protein span at residues 1005–1024 (FTFALSLLAALAAIFYYHVF).

Component of the unc-83-unc-84 LINC complex which contains at least unc-83 and unc-84. Within the unc-83-unc-84 LINC complex interacts with unc-84 (via C-terminus); the interaction is probably required to recruit unc-83 to the nuclear envelope where it then recruits dynein and kinesin-1 complexes to regulate nuclear migration. Interacts with bicd-1 and dlc-1. Interacts with nud-2 (via C-terminus); the interaction is direct, and is required for recruitment of nud-2 to the nuclear envelope. Interacts with klc-2; the interaction is direct. In terms of tissue distribution, predominantly expressed in migratory nuclei. Expressed in a variety of cell-types, including cells around the pharynx and in the uterus.

It localises to the nucleus membrane. The protein resides in the nucleus outer membrane. Cargo-specific adapter that is involved in nuclear migration during development and thereafter. Component of the unc-83-unc-84 LINC (LInker of Nucleoskeleton and Cytoskeleton) complex where it interacts with unc-84 to form a bridge connecting the nuclear envelope to the cytoskeleton which allows for nuclear transport along microtubules. Within the complex, connects the nuclear envelope to the microtubule cytoskeleton through the kinesin-1 light chain protein klc-2 (most likely within the Kinesin 1 motor complex) to regulate nuclear migrations. Moreover, within the complex, also recruits the large microtubule-associated bicd-1-dlc-1-egal-1 and lis-1-nud-2 complexes to the nuclear envelope to regulate both the bidirectional migration of nuclei and the extent of nuclear migrations. Not required for centrosome attachment to the nucleus. The polypeptide is Nuclear migration protein unc-83 (Caenorhabditis elegans).